We begin with the raw amino-acid sequence, 295 residues long: Calcium-regulated actin-bundling protein (295 aa).

Monomer.

May contribute to the structure and reorganization of filopodia and pseudopodia accompanying cell movements. This Dictyostelium discoideum (Social amoeba) protein is Calcium-regulated actin-bundling protein (abpB).